Reading from the N-terminus, the 728-residue chain is FAS1 domain-containing protein fsc1 (728 aa).

An N-terminal signal peptide occupies residues 1-21 (MNLQFRLYLLFILLFISFANG). Topologically, residues 22-670 (KNEYEDKSTS…TKRQNRWRIT (649 aa)) are vacuolar. FAS1 domains are found at residues 29–151 (STSI…DNII) and 154–285 (PPPA…SSLI). Asn-89 carries an N-linked (GlcNAc...) asparagine glycan. 2 N-linked (GlcNAc...) asparagine glycosylation sites follow: Asn-404 and Asn-501. A helical transmembrane segment spans residues 671 to 691 (FISISGLLLSVGICVLCYKIY). Over 692 to 728 (FKFFRNRFMNQGEREPLLAPADSDTMAGRRNSSSLSV) the chain is Cytoplasmic.

It is found in the vacuole membrane. In terms of biological role, required for the fusion of autophagosomes with the vacuole. This Schizosaccharomyces pombe (strain 972 / ATCC 24843) (Fission yeast) protein is FAS1 domain-containing protein fsc1 (fsc1).